Consider the following 507-residue polypeptide: MAKRKVPAEFVVERDDYKCIRCLACVRVCSYGANYYDENANRVYTENYKCVGCHFCEAICPTEAITVRRNNFDIRPLAHWTPEHLIGIMKQADTGGVLLTSMGNDRPYFSYFDRIVLNASQVTNPSIDPLREPMEIRTYIGRKEAKLEIEEDGEGNVALKTEIAPQLKLEVPVMFTAMSYGSISLNALLSLARAARTIGTFFNTGEGGLPKELREFKDNMIVQVASGRFGVSADYLNAGSAVEIKIGQGAKPGIGGHLPGEKVTEPISETRMIPVGTDALSPAPHHDIYSIEDLRQLIYAIKEATRYEKPVGVKIAAVHNVAPIAAGMVRAGADYIVIDGIRGGTGAAPKVTRDHVGIPIEFAIAVVDQRLREEGIRHMASIVVAGGIRNSADVIKAIALGADAVYIGTAALVALGCHLCQTCYLGKCNWGIATQDPKLTKRLNPEIGARRAANLLRAWAHEIKEILGGMGINAIESLRGNREALRGVGLHEYELKLLGIKPAGEAW.

2 4Fe-4S ferredoxin-type domains span residues 10–39 (FVVE…YDEN) and 41–70 (NRVY…VRRN). 8 residues coordinate [4Fe-4S] cluster: Cys19, Cys22, Cys25, Cys29, Cys50, Cys53, Cys56, and Cys60.

This sequence belongs to the glutamate synthase family. FMN is required as a cofactor.

It carries out the reaction 2 L-glutamate + NADP(+) = L-glutamine + 2-oxoglutarate + NADPH + H(+). This is Archaeal-type glutamate synthase [NADPH] from Thermotoga neapolitana (strain ATCC 49049 / DSM 4359 / NBRC 107923 / NS-E).